Reading from the N-terminus, the 171-residue chain is MEKRLQEAQLYKEKGNQCYREGKYRDAVSGYHRALLQLRGLDPSLPSPIPNLGPQGPALTPEQENLLHTTQTDCYNNLAACLLQMEPVNYERVKEYSQKVLERQPDNAKALYRAGVAFFHLQDYDQARHYLMAAVNRKPKDANVRRYLQRTQLELSSYHRKEKQLYLGMFG.

3 TPR repeats span residues 8 to 41 (AQLY…LRGL), 72 to 107 (TDCY…QPDN), and 108 to 141 (AKAL…KPKD).

Belongs to the TTC9 family.

This Bos taurus (Bovine) protein is Tetratricopeptide repeat protein 9C (TTC9C).